We begin with the raw amino-acid sequence, 650 residues long: Fructose-1,6-bisphosphatase class 3 (650 aa).

This sequence belongs to the FBPase class 3 family. It depends on Mn(2+) as a cofactor.

The enzyme catalyses beta-D-fructose 1,6-bisphosphate + H2O = beta-D-fructose 6-phosphate + phosphate. Its pathway is carbohydrate biosynthesis; gluconeogenesis. The chain is Fructose-1,6-bisphosphatase class 3 from Staphylococcus xylosus.